Consider the following 175-residue polypeptide: Large ribosomal subunit protein uL10 (175 aa).

The protein belongs to the universal ribosomal protein uL10 family. Part of the ribosomal stalk of the 50S ribosomal subunit. The N-terminus interacts with L11 and the large rRNA to form the base of the stalk. The C-terminus forms an elongated spine to which L12 dimers bind in a sequential fashion forming a multimeric L10(L12)X complex.

Forms part of the ribosomal stalk, playing a central role in the interaction of the ribosome with GTP-bound translation factors. In Methylococcus capsulatus (strain ATCC 33009 / NCIMB 11132 / Bath), this protein is Large ribosomal subunit protein uL10.